Here is a 180-residue protein sequence, read N- to C-terminus: Large ribosomal subunit protein uL6 (180 aa).

The protein belongs to the universal ribosomal protein uL6 family. In terms of assembly, part of the 50S ribosomal subunit.

In terms of biological role, this protein binds to the 23S rRNA, and is important in its secondary structure. It is located near the subunit interface in the base of the L7/L12 stalk, and near the tRNA binding site of the peptidyltransferase center. In Borrelia turicatae (strain 91E135), this protein is Large ribosomal subunit protein uL6.